The primary structure comprises 191 residues: Ribonuclease HII (191 aa).

The RNase H type-2 domain maps to 7-191 (ILMAGVDEVG…YSPVADLISK (185 aa)). A divalent metal cation contacts are provided by Asp13, Glu14, and Asp103.

It belongs to the RNase HII family. Mn(2+) serves as cofactor. It depends on Mg(2+) as a cofactor.

It localises to the cytoplasm. The enzyme catalyses Endonucleolytic cleavage to 5'-phosphomonoester.. Functionally, endonuclease that specifically degrades the RNA of RNA-DNA hybrids. The chain is Ribonuclease HII from Legionella pneumophila (strain Paris).